Consider the following 485-residue polypeptide: 28S rRNA (uridine-N(3))-methyltransferase (485 aa).

The S-adenosyl-L-methionine site is built by R296, G318, and N347.

This sequence belongs to the class IV-like SAM-binding methyltransferase superfamily.

It localises to the nucleus. The enzyme catalyses uridine in 28S rRNA + S-adenosyl-L-methionine = N(3)-methyluridine in 28S rRNA + S-adenosyl-L-homocysteine + H(+). S-adenosyl-L-methionine-dependent methyltransferase that specifically methylates the uridine in position 3485 of 28S rRNA. The sequence is that of 28S rRNA (uridine-N(3))-methyltransferase from Drosophila melanogaster (Fruit fly).